Here is a 300-residue protein sequence, read N- to C-terminus: Dihydroorotate dehydrogenase B (NAD(+)), catalytic subunit (300 aa).

Residues Ser-21 and 45-46 (KS) each bind FMN. Substrate-binding positions include Lys-45, 69-73 (NAVGL), and Asn-125. Position 125 (Asn-125) interacts with FMN. Cys-128 (nucleophile) is an active-site residue. Positions 163 and 187 each coordinate FMN. A substrate-binding site is contributed by 188–189 (NT). Residues Gly-213, 239 to 240 (GG), and 261 to 262 (GT) each bind FMN.

Belongs to the dihydroorotate dehydrogenase family. Type 1 subfamily. As to quaternary structure, heterotetramer of 2 PyrK and 2 PyrD type B subunits. FMN is required as a cofactor.

It localises to the cytoplasm. It catalyses the reaction (S)-dihydroorotate + NAD(+) = orotate + NADH + H(+). The protein operates within pyrimidine metabolism; UMP biosynthesis via de novo pathway; orotate from (S)-dihydroorotate (NAD(+) route): step 1/1. Catalyzes the conversion of dihydroorotate to orotate with NAD(+) as electron acceptor. The chain is Dihydroorotate dehydrogenase B (NAD(+)), catalytic subunit (pyrD) from Thermoplasma acidophilum (strain ATCC 25905 / DSM 1728 / JCM 9062 / NBRC 15155 / AMRC-C165).